Consider the following 216-residue polypeptide: Putative ripening-related protein 4 (216 aa).

Residues 1–25 (MAANVKVLVVLALLQLMSLHAVVHG) form the signal peptide.

This sequence belongs to the kiwellin family.

Its subcellular location is the secreted. In Oryza sativa subsp. japonica (Rice), this protein is Putative ripening-related protein 4.